The primary structure comprises 374 residues: Multicilin (374 aa).

Disordered stretches follow at residues 18–72 (CPNR…ALPA) and 84–105 (CSSFLGSDPPPGGDSAASQSHS). Residues 168 to 216 (EQYWKEVADQNQRALGDALIENNQLHATLTQKQEEIASLKERNLQLKEL) adopt a coiled-coil conformation. A disordered region spans residues 284–306 (LQSRDPKRLRLQPEPQSLDRRPG).

It belongs to the geminin family. Heterodimer (via coiled-coil domain) with GMNN (via coiled-coil domain); targets GMNN to the nucleus. Can form homodimers (in vitro, via coiled-coil domain), but these are much less stable than the heterodimer formed with GMNN.

The protein resides in the nucleus. Its function is as follows. Transcription regulator specifically required for multiciliate cell differentiation. Acts in a multiprotein complex containing E2F4 and E2F5 that binds and activates genes required for centriole biogenesis. Required for the deuterosome-mediated acentriolar pathway. Plays a role in mitotic cell cycle progression by promoting cell cycle exit. Modulates GMNN activity by reducing its affinity for CDT1. The chain is Multicilin (MCIDAS) from Bos taurus (Bovine).